The chain runs to 356 residues: Dihydroorotate dehydrogenase (quinone) (356 aa).

Residues 60–64 (AGFDK) and Ser-84 contribute to the FMN site. Substrate is bound at residue Lys-64. Residue 109 to 113 (NRFGF) coordinates substrate. 2 residues coordinate FMN: Asn-140 and Asn-171. Asn-171 contacts substrate. The active-site Nucleophile is Ser-174. Asn-176 serves as a coordination point for substrate. Positions 216 and 244 each coordinate FMN. Substrate is bound at residue 245–246 (NT). FMN-binding positions include Gly-267, Gly-296, and 317–318 (YS).

The protein belongs to the dihydroorotate dehydrogenase family. Type 2 subfamily. Monomer. It depends on FMN as a cofactor.

It localises to the cell membrane. The enzyme catalyses (S)-dihydroorotate + a quinone = orotate + a quinol. It participates in pyrimidine metabolism; UMP biosynthesis via de novo pathway; orotate from (S)-dihydroorotate (quinone route): step 1/1. Its function is as follows. Catalyzes the conversion of dihydroorotate to orotate with quinone as electron acceptor. This is Dihydroorotate dehydrogenase (quinone) from Azorhizobium caulinodans (strain ATCC 43989 / DSM 5975 / JCM 20966 / LMG 6465 / NBRC 14845 / NCIMB 13405 / ORS 571).